We begin with the raw amino-acid sequence, 106 residues long: Large ribosomal subunit protein uL22 (106 aa).

It belongs to the universal ribosomal protein uL22 family. As to quaternary structure, part of the 50S ribosomal subunit.

Its function is as follows. This protein binds specifically to 23S rRNA; its binding is stimulated by other ribosomal proteins, e.g. L4, L17, and L20. It is important during the early stages of 50S assembly. It makes multiple contacts with different domains of the 23S rRNA in the assembled 50S subunit and ribosome. Functionally, the globular domain of the protein is located near the polypeptide exit tunnel on the outside of the subunit, while an extended beta-hairpin is found that lines the wall of the exit tunnel in the center of the 70S ribosome. The sequence is that of Large ribosomal subunit protein uL22 from Nautilia profundicola (strain ATCC BAA-1463 / DSM 18972 / AmH).